Here is a 1639-residue protein sequence, read N- to C-terminus: RIMS-binding protein 3B (1639 aa).

Disordered regions lie at residues 1–22 (MAKDSPSPLGASPKKPGCSSPA), 215–240 (GSPDPQAVHSLEEPLPQTSSGSCHAP), and 295–364 (SLDS…LTPS). A coiled-coil region spans residues 21-143 (PAAAVLENQR…ELQRQLAEEL (123 aa)). Pro residues predominate over residues 326-339 (SPPPSPLPPPPPPS). Coiled coils occupy residues 409-442 (QADEKVKRLKVKRAELTGLARRLADRARELQETN) and 480-619 (LAKD…AEEN). Residues 697–811 (CRPGHPPEQP…DRDTASEVDD (115 aa)) are disordered. Polar residues-rich tracts occupy residues 707–718 (WETSQMPESQVK) and 761–775 (SVPQVSETVPASQPL). Low complexity predominate over residues 776-790 (SKKTSSQSNSSSEGS). Residues 832–899 (PKLKIFMAQY…PSNFVEQIPD (68 aa)) enclose the SH3 1 domain. 2 consecutive Fibronectin type-III domains span residues 995–1083 (APMQ…TLLA) and 1088–1184 (PPLE…IPED). Disordered stretches follow at residues 1251 to 1273 (PRRQSPVSNLGSEGECPSSGAGS), 1292 to 1325 (QKSPQNHRPPSVSDQPGEKENCYQHMGTSKSPAP), and 1392 to 1413 (GTERREERREPEPHSRQGQALG). Polar residues predominate over residues 1293–1305 (KSPQNHRPPSVSD). A compositionally biased stretch (basic and acidic residues) spans 1392-1406 (GTERREERREPEPHS). 2 SH3 domains span residues 1452 to 1520 (TPAR…EMEV) and 1569 to 1636 (WTPK…HMSL).

Belongs to the RIMBP family. In terms of assembly, interacts with LRGUK (via guanylate kinase-like domain). Interacts (via C-terminus) with HOOK1 (via coiled-coil region).

The protein resides in the cytoplasm. Its subcellular location is the cytoskeleton. Functionally, probable component of the manchette, a microtubule-based structure which plays a key role in sperm head morphogenesis during late stages of sperm development. This Homo sapiens (Human) protein is RIMS-binding protein 3B (RIMBP3B).